Here is a 359-residue protein sequence, read N- to C-terminus: 3-dehydroquinate synthase (359 aa).

NAD(+) contacts are provided by residues 71–76, 105–109, 129–130, Lys-142, Lys-151, and 169–172; these read DGEQFK, GVIGD, TT, and CLQT. 3 residues coordinate Zn(2+): Glu-184, His-247, and His-264.

It belongs to the sugar phosphate cyclases superfamily. Dehydroquinate synthase family. Requires Co(2+) as cofactor. The cofactor is Zn(2+). NAD(+) is required as a cofactor.

The protein localises to the cytoplasm. It catalyses the reaction 7-phospho-2-dehydro-3-deoxy-D-arabino-heptonate = 3-dehydroquinate + phosphate. The protein operates within metabolic intermediate biosynthesis; chorismate biosynthesis; chorismate from D-erythrose 4-phosphate and phosphoenolpyruvate: step 2/7. In terms of biological role, catalyzes the conversion of 3-deoxy-D-arabino-heptulosonate 7-phosphate (DAHP) to dehydroquinate (DHQ). This chain is 3-dehydroquinate synthase, found in Shewanella sp. (strain MR-4).